We begin with the raw amino-acid sequence, 150 residues long: Urease accessory protein UreE (150 aa).

The protein belongs to the UreE family.

The protein localises to the cytoplasm. In terms of biological role, involved in urease metallocenter assembly. Binds nickel. Probably functions as a nickel donor during metallocenter assembly. The polypeptide is Urease accessory protein UreE (Staphylococcus epidermidis (strain ATCC 35984 / DSM 28319 / BCRC 17069 / CCUG 31568 / BM 3577 / RP62A)).